A 430-amino-acid polypeptide reads, in one-letter code: Meiotically up-regulated gene 132 protein (430 aa).

This sequence belongs to the UPF0300 family.

Its subcellular location is the mitochondrion. Functionally, has a role in meiosis. In Schizosaccharomyces pombe (strain 972 / ATCC 24843) (Fission yeast), this protein is Meiotically up-regulated gene 132 protein (mug132).